The chain runs to 311 residues: Taste receptor type 2 member 9 (311 aa).

Topologically, residues 1–9 are extracellular; the sequence is MPSTIEAIY. A helical transmembrane segment spans residues 10-32; it reads IILIAGELTIGIWGNGFIVLVNC. Over 33 to 52 the chain is Cytoplasmic; sequence IDWLKRRDVSLIDIILISLA. A helical membrane pass occupies residues 53–72; that stretch reads ISRICLLCVISLDGFFILLF. The Extracellular segment spans residues 73 to 86; sequence PGTYDTNVLESIMD. The chain crosses the membrane as a helical span at residues 87 to 109; sequence AVWTFANNSSLWFTSCLSIFYLL. The Cytoplasmic portion of the chain corresponds to 110 to 128; it reads KIANISHPFFFWLKLKINK. A helical transmembrane segment spans residues 129–146; sequence VILAILLGSFLISLIISF. Residues 147-179 lie on the Extracellular side of the membrane; the sequence is PINGMWYNLFKVSHEENITWAFKVSTIPGAFKQ. An N-linked (GlcNAc...) asparagine glycan is attached at Asn163. Residues 180–202 form a helical membrane-spanning segment; the sequence is LTLNLGAMVPFILCLISFFLLLF. Topologically, residues 203 to 233 are cytoplasmic; sequence SLVRHTKQIQLHATGFRDPSTEAHMRAVKAV. A helical transmembrane segment spans residues 234 to 256; that stretch reads IIFLLLLILYYPVFLVMTSSTLI. At 257–260 the chain is on the extracellular side; it reads PQGK. The helical transmembrane segment at 261–283 threads the bilayer; it reads LVLMIGDIVTVIFPSSHSFILIM. The Cytoplasmic portion of the chain corresponds to 284–311; it reads GNSKLRAAFLKMLRFVKGFLRRRKPFVP.

Belongs to the G-protein coupled receptor T2R family.

Its subcellular location is the membrane. Functionally, gustducin-coupled receptor implicated in the perception of bitter compounds in the oral cavity and the gastrointestinal tract. Signals through PLCB2 and the calcium-regulated cation channel TRPM5. The chain is Taste receptor type 2 member 9 (TAS2R9) from Macaca mulatta (Rhesus macaque).